The sequence spans 805 residues: Angiotensin-converting enzyme 2 (805 aa).

An N-terminal signal peptide occupies residues 1–17; sequence MSSSCWLLLSLVAVATA. The Extracellular segment spans residues 18–740; that stretch reads QSLIEEKAES…LKPPYEPPVT (723 aa). The region spanning 19–607 is the Peptidase M2 domain; sequence SLIEEKAESF…QNRNSTVGWS (589 aa). Asn-53, Asn-82, and Asn-90 each carry an N-linked (GlcNAc...) asparagine glycan. An intrachain disulfide couples Cys-133 to Cys-141. Residue Arg-169 participates in chloride binding. Arg-273 serves as a coordination point for substrate. The N-linked (GlcNAc...) asparagine glycan is linked to Asn-299. Cys-344 and Cys-361 form a disulfide bridge. 345-346 serves as a coordination point for substrate; that stretch reads HP. His-374 contributes to the Zn(2+) binding site. Catalysis depends on Glu-375, which acts as the Proton acceptor. Zn(2+) contacts are provided by His-378 and Glu-402. N-linked (GlcNAc...) asparagine glycosylation is present at Asn-432. Chloride is bound by residues Trp-477 and Lys-481. His-505 functions as the Proton donor in the catalytic mechanism. Tyr-515 is a substrate binding site. Cys-530 and Cys-542 are joined by a disulfide. Asn-546 and Asn-601 each carry an N-linked (GlcNAc...) asparagine glycan. The 192-residue stretch at 614 to 805 folds into the Collectrin-like domain; that stretch reads ADQSIKVRIS…QNSDDAQTSF (192 aa). The essential for cleavage by ADAM17 stretch occupies residues 652-659; sequence REYFSREK. Residues Asn-660 and Asn-690 are each glycosylated (N-linked (GlcNAc...) asparagine). Residues 697–716 form an essential for cleavage by TMPRSS11D and TMPRSS2 region; it reads RSEVEEAIRMSRGRINDIFG. Residues 741 to 761 traverse the membrane as a helical segment; the sequence is IWLIIFGVVMGTVVVGIVILI. Residues 762 to 805 are Cytoplasmic-facing; that stretch reads VTGIKGRKKKNETKREENPYDSMDIGKGESNAGFQNSDDAQTSF. The interval 771-805 is disordered; sequence KNETKREENPYDSMDIGKGESNAGFQNSDDAQTSF. An LIR motif is present at residues 778-786; the sequence is ENPYDSMDI. Phosphotyrosine is present on Tyr-781. The short motif at 781–784 is the Endocytic sorting signal element; the sequence is YDSM. The short motif at 781 to 785 is the SH2-binding element; that stretch reads YDSMD. At Ser-783 the chain carries Phosphoserine. Lys-788 is covalently cross-linked (Glycyl lysine isopeptide (Lys-Gly) (interchain with G-Cter in ubiquitin)). Residues 792–795 carry the PTB motif; that stretch reads NAGF. Residues 793–805 show a composition bias toward polar residues; that stretch reads AGFQNSDDAQTSF. Residues 803–805 carry the PDZ-binding motif; the sequence is TSF.

The protein belongs to the peptidase M2 family. As to quaternary structure, homodimer. Interacts with the catalytically active form of TMPRSS2. Interacts with SLC6A19; this interaction is essential for expression and function of SLC6A19 in intestine. Interacts with ITGA5:ITGB1. Probably interacts (via endocytic sorting signal motif) with AP2M1; the interaction is inhibited by phosphorylation of Tyr-781. Interacts (via PDZ-binding motif) with NHERF1 (via PDZ domains); the interaction may enhance ACE2 membrane residence. Requires Zn(2+) as cofactor. Chloride serves as cofactor. Glycosylated. Post-translationally, proteolytic cleavage by ADAM17 generates a secreted form. Also cleaved by serine proteases: TMPRSS2, TMPRSS11D and HPN/TMPRSS1. In terms of processing, phosphorylated. Phosphorylation at Tyr-781 probably inhibits interaction with AP2M1 and enables interactions with proteins containing SH2 domains. Ubiquitinated. Ubiquitinated on Lys-788 via 'Lys-48'-linked ubiquitin. 'Lys-48'-linked deubiquitinated by USP50 on the Lys-788; leading to its stabilization. Expressed in heart, kidney and forebrain. In testis, expression is restricted to Leydig cells. In heart, expressed in endothelial cells from small and large arteries, arterial smooth muscle cells, and myocytes (at protein level). Ubiquitously expressed, with highest levels in ileum, bladder and lung.

Its subcellular location is the secreted. It is found in the cell membrane. It localises to the cytoplasm. The protein localises to the cell projection. The protein resides in the cilium. Its subcellular location is the apical cell membrane. The catalysed reaction is angiotensin II + H2O = angiotensin-(1-7) + L-phenylalanine. The enzyme catalyses angiotensin I + H2O = angiotensin-(1-9) + L-leucine. It catalyses the reaction bradykinin(1-8) + H2O = bradykinin(1-7) + L-phenylalanine. It carries out the reaction neurotensin + H2O = neurotensin-(1-12) + L-leucine. The catalysed reaction is kinetensin + H2O = kinetensin-(1-8) + L-leucine. The enzyme catalyses dynorphin A-(1-13) + H2O = dynorphin A-(1-12) + L-lysine. It catalyses the reaction apelin-13 + H2O = apelin-12 + L-phenylalanine. It carries out the reaction [Pyr1]apelin-13 + H2O = [Pyr1]apelin-12 + L-phenylalanine. The catalysed reaction is apelin-17 + H2O = apelin-16 + L-phenylalanine. Its activity is regulated as follows. Activated by chloride and fluoride, but not bromide. Inhibited by MLN-4760, cFP_Leu, and EDTA, but not by the ACE inhibitors linosipril, captopril, enalaprilat. Essential counter-regulatory carboxypeptidase of the renin-angiotensin hormone system that is a critical regulator of blood volume, systemic vascular resistance, and thus cardiovascular homeostasis. Converts angiotensin I to angiotensin 1-9, a nine-amino acid peptide with anti-hypertrophic effects in cardiomyocytes, and angiotensin II to angiotensin 1-7, which then acts as a beneficial vasodilator and anti-proliferation agent, counterbalancing the actions of the vasoconstrictor angiotensin II. Also removes the C-terminal residue from three other vasoactive peptides, neurotensin, kinetensin, and des-Arg bradykinin, but is not active on bradykinin. Also cleaves other biological peptides, such as apelins, casomorphins and dynorphin A. Plays an important role in amino acid transport by acting as binding partner of amino acid transporter SLC6A19 in intestine, regulating trafficking, expression on the cell surface, and its catalytic activity. This chain is Angiotensin-converting enzyme 2 (Ace2), found in Rattus norvegicus (Rat).